A 542-amino-acid chain; its full sequence is POTE ankyrin domain family member C (542 aa).

ANK repeat units lie at residues 138 to 171 (EDLD…KRDK), 172 to 201 (QKRT…QLNV), 205 to 234 (KKRT…DQNI), 238 to 267 (YGNT…DIES), 271 to 300 (CGLT…NLNA), 304 to 333 (YGRT…DVSS), and 337 to 373 (SGQT…SENS). Residues 369–494 (SSENSNPEQD…NTGISQDEIL (126 aa)) are disordered. 3 stretches are compositionally biased toward basic and acidic residues: residues 377-392 (QDLK…RLKV), 401-412 (MSQEPEINKDCD), and 466-481 (EEYH…KQLS). The span at 482 to 494 (EEQNTGISQDEIL) shows a compositional bias: polar residues. Positions 489–538 (SQDEILTNKQKQIEVAEKKMNSELSLSHKKEEDLLRENSMLQEEIAMLIS) form a coiled coil.

It belongs to the POTE family. Expressed in prostate and testis.

The protein is POTE ankyrin domain family member C (POTEC) of Homo sapiens (Human).